The primary structure comprises 251 residues: Octanoyltransferase (251 aa).

In terms of domain architecture, BPL/LPL catalytic spans 49-230; the sequence is DEIPDQLLIL…ALDDALAGRL (182 aa). Substrate is bound by residues 87-94, 160-162, and 173-175; these read RGGRITWH, AIG, and GVA. Cys-191 serves as the catalytic Acyl-thioester intermediate.

The protein belongs to the LipB family.

It localises to the cytoplasm. The enzyme catalyses octanoyl-[ACP] + L-lysyl-[protein] = N(6)-octanoyl-L-lysyl-[protein] + holo-[ACP] + H(+). It functions in the pathway protein modification; protein lipoylation via endogenous pathway; protein N(6)-(lipoyl)lysine from octanoyl-[acyl-carrier-protein]: step 1/2. Functionally, catalyzes the transfer of endogenously produced octanoic acid from octanoyl-acyl-carrier-protein onto the lipoyl domains of lipoate-dependent enzymes. Lipoyl-ACP can also act as a substrate although octanoyl-ACP is likely to be the physiological substrate. The sequence is that of Octanoyltransferase from Corynebacterium glutamicum (strain R).